Consider the following 211-residue polypeptide: ATP-dependent Clp protease proteolytic subunit (211 aa).

Ser-106 serves as the catalytic Nucleophile. His-131 is an active-site residue.

This sequence belongs to the peptidase S14 family. Fourteen ClpP subunits assemble into 2 heptameric rings which stack back to back to give a disk-like structure with a central cavity, resembling the structure of eukaryotic proteasomes.

It is found in the cytoplasm. The enzyme catalyses Hydrolysis of proteins to small peptides in the presence of ATP and magnesium. alpha-casein is the usual test substrate. In the absence of ATP, only oligopeptides shorter than five residues are hydrolyzed (such as succinyl-Leu-Tyr-|-NHMec, and Leu-Tyr-Leu-|-Tyr-Trp, in which cleavage of the -Tyr-|-Leu- and -Tyr-|-Trp bonds also occurs).. Functionally, cleaves peptides in various proteins in a process that requires ATP hydrolysis. Has a chymotrypsin-like activity. Plays a major role in the degradation of misfolded proteins. This Nitrobacter hamburgensis (strain DSM 10229 / NCIMB 13809 / X14) protein is ATP-dependent Clp protease proteolytic subunit.